The sequence spans 338 residues: S-adenosylmethionine:tRNA ribosyltransferase-isomerase (338 aa).

This sequence belongs to the QueA family. Monomer.

The protein resides in the cytoplasm. The catalysed reaction is 7-aminomethyl-7-carbaguanosine(34) in tRNA + S-adenosyl-L-methionine = epoxyqueuosine(34) in tRNA + adenine + L-methionine + 2 H(+). It participates in tRNA modification; tRNA-queuosine biosynthesis. Its function is as follows. Transfers and isomerizes the ribose moiety from AdoMet to the 7-aminomethyl group of 7-deazaguanine (preQ1-tRNA) to give epoxyqueuosine (oQ-tRNA). This Carboxydothermus hydrogenoformans (strain ATCC BAA-161 / DSM 6008 / Z-2901) protein is S-adenosylmethionine:tRNA ribosyltransferase-isomerase.